Consider the following 560-residue polypeptide: Cytosolic purine 5'-nucleotidase (560 aa).

D52 functions as the Nucleophile in the catalytic mechanism. 2 residues coordinate IMP: D52 and D54. Mg(2+) is bound by residues D52 and D54. D54 serves as the catalytic Proton donor. ATP is bound by residues R144 and N154. IMP is bound by residues R202, D206, K215, T249, N250, S251, and K292. D351 provides a ligand contact to Mg(2+). A Phosphoserine modification is found at S418. Positions 453 and 456 each coordinate ATP. Phosphoserine occurs at positions 502, 511, and 527. The segment at 541–560 (PQEITHCHDEDDDEEEEEEE) is disordered. Residues 548–560 (HDEDDDEEEEEEE) form a required for tetramer assembly region. Positions 550 to 560 (EDDDEEEEEEE) are enriched in acidic residues.

Belongs to the 5'(3')-deoxyribonucleotidase family. As to quaternary structure, homotetramer. Mg(2+) serves as cofactor.

It localises to the cytoplasm. It is found in the cytosol. It catalyses the reaction a ribonucleoside 5'-phosphate + H2O = a ribonucleoside + phosphate. The catalysed reaction is a 2'-deoxyribonucleoside + a ribonucleoside 5'-phosphate = a ribonucleoside + a 2'-deoxyribonucleoside 5'-phosphate. It carries out the reaction IMP + H2O = inosine + phosphate. The enzyme catalyses GMP + H2O = guanosine + phosphate. It catalyses the reaction dIMP + H2O = 2'-deoxyinosine + phosphate. The catalysed reaction is dGMP + H2O = 2'-deoxyguanosine + phosphate. It carries out the reaction XMP + H2O = xanthosine + phosphate. The enzyme catalyses inosine + GMP = guanosine + IMP. It catalyses the reaction dGMP + inosine = 2'-deoxyguanosine + IMP. The catalysed reaction is dIMP + inosine = 2'-deoxyinosine + IMP. It carries out the reaction inosine + UMP = uridine + IMP. The enzyme catalyses inosine + CMP = cytidine + IMP. It catalyses the reaction inosine + AMP = IMP + adenosine. With respect to regulation, allosterically activated by various compounds including ATP, 2,3-BPG/2,3-Bisphosphoglyceric acid and Ap4A/P1,P4-bis(5'-adenosyl) tetraphosphate. Binding of an allosteric activator is a prerequisiste to magnesium and substrate binding. Inhibited by inorganic phosphate. In terms of biological role, broad specificity cytosolic 5'-nucleotidase that catalyzes the dephosphorylation of 6-hydroxypurine nucleoside 5'-monophosphates. In addition, possesses a phosphotransferase activity by which it can transfer a phosphate from a donor nucleoside monophosphate to an acceptor nucleoside, preferably inosine, deoxyinosine and guanosine. Has the highest activities for IMP and GMP followed by dIMP, dGMP and XMP. Could also catalyze the transfer of phosphates from pyrimidine monophosphates but with lower efficiency. Through these activities regulates the purine nucleoside/nucleotide pools within the cell. The chain is Cytosolic purine 5'-nucleotidase from Bos taurus (Bovine).